A 357-amino-acid polypeptide reads, in one-letter code: Ribosomal RNA large subunit methyltransferase F (357 aa).

A compositionally biased stretch (polar residues) spans 1–15 (MPKPPRSTQILSCNA). The interval 1–33 (MPKPPRSTQILSCNAPNGKPKTQHPSARAKVKR) is disordered.

Belongs to the methyltransferase superfamily. METTL16/RlmF family.

It localises to the cytoplasm. It catalyses the reaction adenosine(1618) in 23S rRNA + S-adenosyl-L-methionine = N(6)-methyladenosine(1618) in 23S rRNA + S-adenosyl-L-homocysteine + H(+). In terms of biological role, specifically methylates the adenine in position 1618 of 23S rRNA. This is Ribosomal RNA large subunit methyltransferase F from Shewanella putrefaciens (strain CN-32 / ATCC BAA-453).